An 887-amino-acid polypeptide reads, in one-letter code: Pyruvate dehydrogenase E1 component (887 aa).

In terms of assembly, homodimer. Part of the PDH complex, consisting of multiple copies of pyruvate dehydrogenase (E1), dihydrolipoamide acetyltransferase (E2) and lipoamide dehydrogenase (E3). Thiamine diphosphate serves as cofactor.

The enzyme catalyses N(6)-[(R)-lipoyl]-L-lysyl-[protein] + pyruvate + H(+) = N(6)-[(R)-S(8)-acetyldihydrolipoyl]-L-lysyl-[protein] + CO2. Component of the pyruvate dehydrogenase (PDH) complex, that catalyzes the overall conversion of pyruvate to acetyl-CoA and CO(2). The sequence is that of Pyruvate dehydrogenase E1 component (aceE) from Buchnera aphidicola subsp. Acyrthosiphon pisum (strain APS) (Acyrthosiphon pisum symbiotic bacterium).